The sequence spans 300 residues: ETS homologous factor (300 aa).

Residues 29–115 (STCNVSSGFF…SNLQHLKWNG (87 aa)) enclose the PNT domain. The segment at 183–202 (ESPDMKKEQDPPAKCHTKKH) is disordered. A compositionally biased stretch (basic and acidic residues) spans 185-195 (PDMKKEQDPPA). A DNA-binding region (ETS) is located at residues 207–289 (THLWEFIRDI…DGRRLVYKFG (83 aa)).

The protein belongs to the ETS family.

The protein localises to the nucleus. Its function is as follows. Transcriptional activator that may play a role in regulating epithelial cell differentiation and proliferation. May act as a repressor for a specific subset of ETS/AP-1-responsive genes, and as a modulator of the nuclear response to mitogen-activated protein kinase signaling cascades. Binds to DNA sequences containing the consensus nucleotide core sequence GGAA. Involved in regulation of TNFRSF10B/DR5 expression through Ets-binding sequences on the TNFRSF10B/DR5 promoter. This is ETS homologous factor (EHF) from Pan paniscus (Pygmy chimpanzee).